Here is a 487-residue protein sequence, read N- to C-terminus: Bifunctional protein HldE (487 aa).

Residues 1–329 (MLHAVETAFY…GALLTDATYE (329 aa)) are ribokinase. Position 204-207 (204-207 (NRGE)) interacts with ATP. Residue aspartate 274 is part of the active site. A cytidylyltransferase region spans residues 356–487 (FTNGCFDLLH…GIVQRISAQK (132 aa)).

The protein in the N-terminal section; belongs to the carbohydrate kinase PfkB family. This sequence in the C-terminal section; belongs to the cytidylyltransferase family. In terms of assembly, homodimer.

The catalysed reaction is D-glycero-beta-D-manno-heptose 7-phosphate + ATP = D-glycero-beta-D-manno-heptose 1,7-bisphosphate + ADP + H(+). The enzyme catalyses D-glycero-beta-D-manno-heptose 1-phosphate + ATP + H(+) = ADP-D-glycero-beta-D-manno-heptose + diphosphate. Its pathway is nucleotide-sugar biosynthesis; ADP-L-glycero-beta-D-manno-heptose biosynthesis; ADP-L-glycero-beta-D-manno-heptose from D-glycero-beta-D-manno-heptose 7-phosphate: step 1/4. It participates in nucleotide-sugar biosynthesis; ADP-L-glycero-beta-D-manno-heptose biosynthesis; ADP-L-glycero-beta-D-manno-heptose from D-glycero-beta-D-manno-heptose 7-phosphate: step 3/4. Functionally, catalyzes the phosphorylation of D-glycero-D-manno-heptose 7-phosphate at the C-1 position to selectively form D-glycero-beta-D-manno-heptose-1,7-bisphosphate. Catalyzes the ADP transfer from ATP to D-glycero-beta-D-manno-heptose 1-phosphate, yielding ADP-D-glycero-beta-D-manno-heptose. This chain is Bifunctional protein HldE, found in Magnetococcus marinus (strain ATCC BAA-1437 / JCM 17883 / MC-1).